The sequence spans 66 residues: Large ribosomal subunit protein uL29 (66 aa).

The protein belongs to the universal ribosomal protein uL29 family.

This is Large ribosomal subunit protein uL29 from Borrelia turicatae (strain 91E135).